We begin with the raw amino-acid sequence, 357 residues long: Phospho-N-acetylmuramoyl-pentapeptide-transferase (357 aa).

10 helical membrane passes run 23–43 (AIFSLLTSFFINLYIGPYFIY), 70–90 (TMGGIFIIFSILFSTILYCNL), 91–111 (SNIYIWYVISILIGYGLIGFI), 127–147 (LKWKYFFLSIIAFIFICMIKI), 171–191 (YLYIFLSYFVLVGTSNAVNLT), 196–216 (GLAIMPVIFLTCGLTLISLFS), 236–256 (LAILCMAIVGSGLGFLWFNSY), 260–280 (VFMGDVGSLALGGSLGAIAIL), 286–306 (LLIIMGGIFVFETISVILQII), and 334–354 (LIIVRFWIVSLILLLISLISL).

This sequence belongs to the glycosyltransferase 4 family. MraY subfamily. Mg(2+) is required as a cofactor.

It is found in the cell inner membrane. It carries out the reaction UDP-N-acetyl-alpha-D-muramoyl-L-alanyl-gamma-D-glutamyl-meso-2,6-diaminopimeloyl-D-alanyl-D-alanine + di-trans,octa-cis-undecaprenyl phosphate = di-trans,octa-cis-undecaprenyl diphospho-N-acetyl-alpha-D-muramoyl-L-alanyl-D-glutamyl-meso-2,6-diaminopimeloyl-D-alanyl-D-alanine + UMP. It participates in cell wall biogenesis; peptidoglycan biosynthesis. In terms of biological role, catalyzes the initial step of the lipid cycle reactions in the biosynthesis of the cell wall peptidoglycan: transfers peptidoglycan precursor phospho-MurNAc-pentapeptide from UDP-MurNAc-pentapeptide onto the lipid carrier undecaprenyl phosphate, yielding undecaprenyl-pyrophosphoryl-MurNAc-pentapeptide, known as lipid I. This chain is Phospho-N-acetylmuramoyl-pentapeptide-transferase, found in Buchnera aphidicola subsp. Acyrthosiphon pisum (strain 5A).